Here is a 268-residue protein sequence, read N- to C-terminus: Undecaprenyl-diphosphatase (268 aa).

Transmembrane regions (helical) follow at residues 7–27 (IFNA…PISS), 87–107 (LIYH…LCIY), 116–136 (FYSI…TEIS), 146–166 (IETP…WPGF), 187–207 (VEFS…LDVI), 210–230 (FYDI…SAFI), and 247–267 (SLIP…LFFM).

The protein belongs to the UppP family.

The protein resides in the cell membrane. It catalyses the reaction di-trans,octa-cis-undecaprenyl diphosphate + H2O = di-trans,octa-cis-undecaprenyl phosphate + phosphate + H(+). In terms of biological role, catalyzes the dephosphorylation of undecaprenyl diphosphate (UPP). Confers resistance to bacitracin. This chain is Undecaprenyl-diphosphatase, found in Buchnera aphidicola subsp. Baizongia pistaciae (strain Bp).